The primary structure comprises 506 residues: Galactose/methyl galactoside import ATP-binding protein MglA (506 aa).

2 ABC transporter domains span residues 14–249 (LEMS…VGRS) and 264–506 (VILE…SLHL). 46–53 (GENGAGKS) is an ATP binding site.

This sequence belongs to the ABC transporter superfamily. Galactose/methyl galactoside importer (TC 3.A.1.2.3) family. The complex is composed of one ATP-binding protein (MglA), two transmembrane proteins (MglC) and a solute-binding protein (MglB).

Its subcellular location is the cell inner membrane. It catalyses the reaction D-galactose(out) + ATP + H2O = D-galactose(in) + ADP + phosphate + H(+). The enzyme catalyses methyl beta-D-galactoside(out) + ATP + H2O = methyl beta-D-galactoside(in) + ADP + phosphate + H(+). Part of the ABC transporter complex MglABC involved in galactose/methyl galactoside import. Responsible for energy coupling to the transport system. This chain is Galactose/methyl galactoside import ATP-binding protein MglA, found in Yersinia pestis bv. Antiqua (strain Antiqua).